The following is a 1530-amino-acid chain: Brefeldin A resistance protein (1530 aa).

The segment covering 1–26 (MNQNSDTTHGQALGSTLNHTTEVTRI) has biased composition (polar residues). The disordered stretch occupies residues 1-100 (MNQNSDTTHG…SDDSSVDRLA (100 aa)). A glycan (N-linked (GlcNAc...) asparagine) is linked at N28. Residues 36–48 (SSSNVDESLDSSN) show a composition bias toward low complexity. Positions 54–64 (KASHTNEEYRS) are enriched in basic and acidic residues. N-linked (GlcNAc...) asparagine glycosylation occurs at N67. The span at 72–93 (PSSSNEPSPESSSNSDSSSSDD) shows a compositional bias: low complexity. Residues 153 to 410 (KTFPDIFLQP…FLDMGFDCHP (258 aa)) enclose the ABC transporter 1 domain. Residues N273, N334, and N450 are each glycosylated (N-linked (GlcNAc...) asparagine). 2 positions are modified to phosphoserine: S486 and S489. At T491 the chain carries Phosphothreonine. Helical transmembrane passes span 539 to 559 (AYIG…GSIF), 575 to 595 (VLFF…ANMF), 620 to 640 (LIVD…VLYF), 649 to 669 (GGFW…SAFF), 684 to 704 (ALGG…IPNI), and 791 to 811 (LAII…ASET). The disordered stretch occupies residues 843–864 (PLDLETGQDTQGGDVVKESPDN). Positions 882–1125 (FSWRNLNYDI…LLNYFESHGA (244 aa)) constitute an ABC transporter 2 domain. 918-925 (GESGAGKT) contributes to the ATP binding site. Residues N1159 and N1175 are each glycosylated (N-linked (GlcNAc...) asparagine). T1186 carries the phosphothreonine modification. 6 helical membrane-spanning segments follow: residues 1220-1240 (ILMS…FTFY), 1255-1275 (AVFM…PKFI), 1300-1320 (AIIV…LCWF), 1338-1358 (YAWL…QAVA), 1367-1387 (ASVV…VLQP), and 1392-1412 (VGFW…EGLL). N-linked (GlcNAc...) asparagine glycans are attached at residues N1449 and N1460. A helical transmembrane segment spans residues 1492 to 1512 (GIFVGYVFFNIFAVLLLFYVF).

This sequence belongs to the ABC transporter superfamily. ABCG family. PDR (TC 3.A.1.205) subfamily.

The protein resides in the membrane. In terms of biological role, confers hyper-resistance to brefeldin A (BFA), an inhibitor of intracellular protein transport. Could serve as an efflux pump of various antibiotics. This is Brefeldin A resistance protein (bfr1) from Schizosaccharomyces pombe (strain 972 / ATCC 24843) (Fission yeast).